The primary structure comprises 546 residues: Oncoprotein-induced transcript 3 protein (546 aa).

Positions 1–19 (MPLSLLLTCLSTTVTLVSP) are cleaved as a signal peptide. Asn-89 and Asn-116 each carry an N-linked (GlcNAc...) asparagine glycan. Positions 182 to 222 (DENECEHNNGGCSEICVNLKNSHRCACGVGRVLRSDGKTCE) constitute an EGF-like; calcium-binding domain. Disulfide bonds link Cys-186–Cys-197, Cys-193–Cys-206, and Cys-208–Cys-221. One can recognise a ZP domain in the interval 261–516 (TCQVPVLCKS…SRCAQGCHRR (256 aa)). N-linked (GlcNAc...) asparagine glycosylation is present at Asn-299.

In terms of tissue distribution, liver-specific. Expressed only in the hepatocytes.

Its subcellular location is the nucleus envelope. In terms of biological role, may be involved in hepatocellular function and development. The sequence is that of Oncoprotein-induced transcript 3 protein (Oit3) from Mus musculus (Mouse).